The following is a 70-amino-acid chain: MGKVRIFLPLTSLSIEITHPPTELIQSIIVDSLWGIRWYISLSFTTSTLKMLVRSTVSSICLLISSDIIF.

This is an uncharacterized protein from Vaccinia virus (strain Copenhagen) (VACV).